The sequence spans 257 residues: Nuclear receptor subfamily 0 group B member 2 (257 aa).

In terms of domain architecture, NR LBD spans 16 to 257 (SRPAILYALL…GLLGDMLLLR (242 aa)). Arginine 57 carries the post-translational modification Symmetric dimethylarginine; by PRMT5.

This sequence belongs to the nuclear hormone receptor family. NR0 subfamily. Interacts (via N-terminus) with NEUROD1 (via N-terminus and C-terminus). Interacts with ID2. Interacts with RORG, NFIL3, NR1D1 and BHLHE41. Heterodimer; efficient DNA binding requires dimerization with another bHLH protein. Interacts with RARA, RXRA, THRB, NR5A1, NR5A2, NR1I3, PPARA, PPARG and EID1. Interacts with HNF4A; the resulting heterodimer is transcriptionally inactive. Interacts with DDX3X; this interaction disrupts the interaction between HNF4 and NR0B2/SHP that forms inactive heterodimers and enhances the formation of active HNF4 homodimers. In terms of processing, arginine methylation by PRMT5 enhances repression activity of metabolic genes in liver in response to bile acid signaling, by increasing interaction with cofactors. In terms of tissue distribution, liver. Low levels of expression were detected in heart and pancreas.

It is found in the nucleus. The protein resides in the cytoplasm. Its function is as follows. Transcriptional regulator that acts as a negative regulator of receptor-dependent signaling pathways. Specifically inhibits transactivation of the nuclear receptor with which it interacts. Inhibits transcriptional activity of NEUROD1 on E-box-containing promoter by interfering with the coactivation function of the p300/CBP-mediated transcription complex for NEUROD1. Essential component of the liver circadian clock which via its interaction with NR1D1 and RORG regulates NPAS2-mediated hepatic lipid metabolism. Regulates the circadian expression of cytochrome P450 (CYP) enzymes. Represses: NR5A2 and HNF4A to down-regulate CYP2C38, NFLI3 to up-regulate CYP2A5, BHLHE41/HNF1A axis to up-regulate CYP1A2, CYP2E1 and CYP3A11, and NR1D1 to up-regulate CYP2B10, CYP4A10 and CYP4A14. The sequence is that of Nuclear receptor subfamily 0 group B member 2 (NR0B2) from Homo sapiens (Human).